The following is a 186-amino-acid chain: Ribosome-recycling factor (186 aa).

It belongs to the RRF family.

The protein localises to the cytoplasm. Its function is as follows. Responsible for the release of ribosomes from messenger RNA at the termination of protein biosynthesis. May increase the efficiency of translation by recycling ribosomes from one round of translation to another. This is Ribosome-recycling factor from Rickettsia prowazekii (strain Madrid E).